A 478-amino-acid polypeptide reads, in one-letter code: E3 ubiquitin-protein ligase makorin-1 (478 aa).

C3H1-type zinc fingers lie at residues 51-78 (WTKQVTCRYFMHGVCKKGNNCRYSHDLS), 80-107 (SQSAMVCRYYQRGCCAYGDRCRYEHTKP), and 204-231 (EMKKQLCPYAAVGECRYGENCVYLHGDA). The makorin-type Cys-His stretch occupies residues 232–259 (CDMCGLQVLHPVDAAQRSQHIKSCIEAH). The RING-type zinc finger occupies 277 to 331 (CGICMEVVYEKANPSERRFGILSNCNHTYCLKCIRKWRSAKQFESKIIKSCPECR). Residues 360-389 (AMSNKPCRYFDEGRGSCPFGGNCFYKHAYP) form a C3H1-type 4 zinc finger.

As to quaternary structure, interacts with p53/TP53 and CDKN1A. Interacts with TERT, modulating telomere length homeostasis. In terms of processing, auto-ubiquitinated; which leads to proteasomal degradation.

It carries out the reaction S-ubiquitinyl-[E2 ubiquitin-conjugating enzyme]-L-cysteine + [acceptor protein]-L-lysine = [E2 ubiquitin-conjugating enzyme]-L-cysteine + N(6)-ubiquitinyl-[acceptor protein]-L-lysine.. The protein operates within protein modification; protein ubiquitination. Its function is as follows. E3 ubiquitin ligase catalyzing the covalent attachment of ubiquitin moieties onto substrate proteins. These substrates include FILIP1, p53/TP53, CDKN1A and TERT. Keeps cells alive by suppressing p53/TP53 under normal conditions, but stimulates apoptosis by repressing CDKN1A under stress conditions. Acts as a negative regulator of telomerase. Has negative and positive effects on RNA polymerase II-dependent transcription. This is E3 ubiquitin-protein ligase makorin-1 (MKRN1) from Notamacropus eugenii (Tammar wallaby).